Reading from the N-terminus, the 315-residue chain is Methionyl-tRNA formyltransferase (315 aa).

113-116 (SLLP) is a (6S)-5,6,7,8-tetrahydrofolate binding site.

It belongs to the Fmt family.

The enzyme catalyses L-methionyl-tRNA(fMet) + (6R)-10-formyltetrahydrofolate = N-formyl-L-methionyl-tRNA(fMet) + (6S)-5,6,7,8-tetrahydrofolate + H(+). Functionally, attaches a formyl group to the free amino group of methionyl-tRNA(fMet). The formyl group appears to play a dual role in the initiator identity of N-formylmethionyl-tRNA by promoting its recognition by IF2 and preventing the misappropriation of this tRNA by the elongation apparatus. The protein is Methionyl-tRNA formyltransferase of Escherichia coli O139:H28 (strain E24377A / ETEC).